The chain runs to 149 residues: Large ribosomal subunit protein bL9 (149 aa).

Belongs to the bacterial ribosomal protein bL9 family.

Binds to the 23S rRNA. In Helicobacter pylori (strain J99 / ATCC 700824) (Campylobacter pylori J99), this protein is Large ribosomal subunit protein bL9.